The primary structure comprises 118 residues: CLAVATA3/ESR (CLE)-related protein 12 (118 aa).

Residues Met-1–Tyr-35 form the signal peptide. Basic and acidic residues-rich tracts occupy residues Thr-75–Glu-91 and Ile-98–Arg-108. Residues Thr-75–His-118 are disordered. Hydroxyproline occurs at positions 110 and 113. An O-linked (Ara...) hydroxyproline glycan is attached at Pro-113.

This sequence belongs to the CLV3/ESR signal peptide family. The O-glycosylation (arabinosylation) of the hydroxyproline Pro-113 enhances binding affinity of the CLE12p peptide for its receptor. In terms of tissue distribution, mostly expressed in seedlings, roots, flowers, stems and apex, and, to a lower extent, in leaves and siliques.

The protein resides in the secreted. It is found in the extracellular space. Functionally, extracellular signal peptide that regulates cell fate. Represses root apical meristem maintenance. This is CLAVATA3/ESR (CLE)-related protein 12 from Arabidopsis thaliana (Mouse-ear cress).